We begin with the raw amino-acid sequence, 253 residues long: Phosphate import ATP-binding protein PstB 3 (253 aa).

The region spanning 8–248 (LVINNLDLYY…PQDERTENYI (241 aa)) is the ABC transporter domain. Position 40–47 (40–47 (GPSGCGKS)) interacts with ATP.

It belongs to the ABC transporter superfamily. Phosphate importer (TC 3.A.1.7) family. In terms of assembly, the complex is composed of two ATP-binding proteins (PstB), two transmembrane proteins (PstC and PstA) and a solute-binding protein (PstS).

The protein localises to the cell membrane. It catalyses the reaction phosphate(out) + ATP + H2O = ADP + 2 phosphate(in) + H(+). In terms of biological role, part of the ABC transporter complex PstSACB involved in phosphate import. Responsible for energy coupling to the transport system. The polypeptide is Phosphate import ATP-binding protein PstB 3 (Streptococcus agalactiae serotype III (strain NEM316)).